Reading from the N-terminus, the 259-residue chain is UPF0739 protein C1orf74 homolog (259 aa).

Belongs to the UPF0739 family.

The sequence is that of UPF0739 protein C1orf74 homolog from Danio rerio (Zebrafish).